Reading from the N-terminus, the 919-residue chain is DNA double-strand break repair Rad50 ATPase (919 aa).

Residues 33–39 and glutamine 143 each bind ATP; that span reads NGAGKST. Coiled coils occupy residues 208 to 268, 315 to 379, and 414 to 458; these read MTLR…MLVN, HEVA…RRYT, and ESVL…LEES. The Zinc-hook domain occupies 417–516; the sequence is LERLDAVIND…EASRLQDKRR (100 aa). Zn(2+)-binding residues include cysteine 464 and cysteine 467. Coiled coils occupy residues 486 to 515, 541 to 595, and 635 to 749; these read EAER…QDKR, EDLA…LQRL, and AYRS…RKAS.

The protein belongs to the SMC family. RAD50 subfamily. As to quaternary structure, homodimer. Forms a heterotetramer composed of two Mre11 subunits and two Rad50 subunits. Zn(2+) serves as cofactor.

Functionally, part of the Rad50/Mre11 complex, which is involved in the early steps of DNA double-strand break (DSB) repair. The complex may facilitate opening of the processed DNA ends to aid in the recruitment of HerA and NurA. Rad50 controls the balance between DNA end bridging and DNA resection via ATP-dependent structural rearrangements of the Rad50/Mre11 complex. The sequence is that of DNA double-strand break repair Rad50 ATPase from Aeropyrum pernix (strain ATCC 700893 / DSM 11879 / JCM 9820 / NBRC 100138 / K1).